The sequence spans 754 residues: Carbon catabolite repressor protein 4 homolog 6 (754 aa).

2 disordered regions span residues 34–65 (PYRGARGRGRGRGGRSFSDRPYNDDAGRDQFV) and 85–176 (EPYR…KTPP). Residues 50 to 61 (FSDRPYNDDAGR) are compositionally biased toward basic and acidic residues. Composition is skewed to polar residues over residues 96-106 (QRQQPPFNQNY) and 116-133 (GQWQQFRQPNQFPSNQNY). The span at 162-171 (KPSDYREWEY) shows a compositional bias: basic and acidic residues. Glu237 contributes to the Mg(2+) binding site. Disordered regions lie at residues 404–431 (VSAEFRPPRPENYTTRYQSANKSPQGQV) and 494–558 (IENR…DQDI). Polar residues-rich tracts occupy residues 415-431 (NYTTRYQSANKSPQGQV), 503-525 (GNLSTAEDLSSLTISDTEPQHAS), and 534-545 (DRSVSSGLSETE).

It belongs to the CCR4/nocturin family. Component of the CCR4-NOT complex, at least composed of CRR4 and CAF1 proteins. Mg(2+) serves as cofactor.

The protein localises to the nucleus. It localises to the cytoplasm. The catalysed reaction is Exonucleolytic cleavage of poly(A) to 5'-AMP.. Its function is as follows. Acts as a catalytic component of the CCR4-NOT core complex, which in the nucleus seems to be a general transcription factor, and in the cytoplasm the major mRNA deadenylase involved in mRNA turnover. The sequence is that of Carbon catabolite repressor protein 4 homolog 6 (CCR4-6) from Arabidopsis thaliana (Mouse-ear cress).